The sequence spans 350 residues: ADP-ribosylhydrolase ARH3 (350 aa).

Mg(2+)-binding residues include Glu27, Thr57, Asp58, and Asp59. Asp58 contacts substrate. Substrate-binding positions include 127–133 (KGSYGNG), His163, Leu216, and Ile252. Asp295, Asp297, and Thr298 together coordinate Mg(2+).

Belongs to the ADP-ribosylglycohydrolase family. In terms of assembly, monomer. Mg(2+) is required as a cofactor.

It is found in the nucleus. The protein localises to the cytoplasm. The protein resides in the chromosome. It localises to the mitochondrion matrix. The catalysed reaction is [(1''-&gt;2')-ADP-alpha-D-ribose](n) + H2O = [(1''-&gt;2')-ADP-alpha-D-ribose](n-1) + ADP-D-ribose. It carries out the reaction 1''-O-acetyl-ADP-alpha-D-ribose + H2O = ADP-D-ribose + acetate + H(+). It catalyses the reaction O-(ADP-D-ribosyl)-L-seryl-[protein] + H2O = ADP-D-ribose + L-seryl-[protein]. The enzyme catalyses alpha-NAD(+) + H2O = ADP-D-ribose + nicotinamide + H(+). The protein undergoes a dramatic conformational switch from closed to open states upon substrate-binding, which enables specific substrate recognition for the 1''-O-linkage. The glutamate flap (Glu-27) blocks substrate entrance to Mg(2+) in the unliganded closed state. In presence of substrate, Glu-27 is ejected from the active site: this closed-to-open transition significantly widens the substrate-binding channel and precisely positions the scissile 1''-O-linkage for cleavage while securing tightly 2'- and 3'-hydroxyls of ADP-ribose. Functionally, ADP-ribosylhydrolase that preferentially hydrolyzes the scissile alpha-O-linkage attached to the anomeric C1'' position of ADP-ribose and acts on different substrates, such as proteins ADP-ribosylated on serine and threonine, free poly(ADP-ribose) and O-acetyl-ADP-D-ribose. Specifically acts as a serine mono-ADP-ribosylhydrolase by mediating the removal of mono-ADP-ribose attached to serine residues on proteins, thereby playing a key role in DNA damage response. Serine ADP-ribosylation of proteins constitutes the primary form of ADP-ribosylation of proteins in response to DNA damage. Does not hydrolyze ADP-ribosyl-arginine, -cysteine, -diphthamide, or -asparagine bonds. Also able to degrade protein free poly(ADP-ribose), which is synthesized in response to DNA damage: free poly(ADP-ribose) acts as a potent cell death signal and its degradation by ADPRHL2 protects cells from poly(ADP-ribose)-dependent cell death, a process named parthanatos. Also hydrolyzes free poly(ADP-ribose) in mitochondria. Specifically digests O-acetyl-ADP-D-ribose, a product of deacetylation reactions catalyzed by sirtuins. Specifically degrades 1''-O-acetyl-ADP-D-ribose isomer, rather than 2''-O-acetyl-ADP-D-ribose or 3''-O-acetyl-ADP-D-ribose isomers. The chain is ADP-ribosylhydrolase ARH3 (adprs) from Xenopus tropicalis (Western clawed frog).